Consider the following 518-residue polypeptide: T-box transcription factor TBX5 (518 aa).

The disordered stretch occupies residues 1 to 46 (MADTDEGFGLARTPLEPDSKDRSCDSKPESALGAPSKSPSSPQAAF). Basic and acidic residues predominate over residues 15-28 (LEPDSKDRSCDSKP). Low complexity predominate over residues 34-45 (APSKSPSSPQAA). A DNA-binding region (T-box) is located at residues 58–238 (LHERELWLKF…NNPFAKGFRG (181 aa)). 2 disordered regions span residues 254–307 (EYPV…LLPP) and 330–352 (ECSS…EEDT). Polar residues predominate over residues 269 to 301 (SNHSPFSSETRALSTSSNLGSQYQCENGVSGPS). Lys-339 is modified (N6-acetyllysine).

As to quaternary structure, monomer. Homodimer (via the T-box); binds DNA as homodimer. Interacts (via the T-box) with NKX2-5 (via the homeobox); this complex binds DNA. Interacts with GATA4. Interacts with KAT2A and KAT2B. In terms of processing, acetylation at Lys-339 by KAT2A and KAT2B promotes nuclear retention.

It localises to the nucleus. Its subcellular location is the cytoplasm. Its function is as follows. DNA-binding protein that regulates the transcription of several genes and is involved in heart development and limb pattern formation. Binds to the core DNA motif of NPPA promoter. This chain is T-box transcription factor TBX5 (Tbx5), found in Mus musculus (Mouse).